Reading from the N-terminus, the 255-residue chain is Ribosomal RNA small subunit methyltransferase A (255 aa).

Residues N12, L14, G39, E60, D84, and N106 each contribute to the S-adenosyl-L-methionine site.

The protein belongs to the class I-like SAM-binding methyltransferase superfamily. rRNA adenine N(6)-methyltransferase family. RsmA subfamily.

It localises to the cytoplasm. It catalyses the reaction adenosine(1518)/adenosine(1519) in 16S rRNA + 4 S-adenosyl-L-methionine = N(6)-dimethyladenosine(1518)/N(6)-dimethyladenosine(1519) in 16S rRNA + 4 S-adenosyl-L-homocysteine + 4 H(+). Its function is as follows. Specifically dimethylates two adjacent adenosines (A1518 and A1519) in the loop of a conserved hairpin near the 3'-end of 16S rRNA in the 30S particle. May play a critical role in biogenesis of 30S subunits. In Herminiimonas arsenicoxydans, this protein is Ribosomal RNA small subunit methyltransferase A.